A 971-amino-acid chain; its full sequence is MEDINLTIFSDDALPHAVVVDDYVIAIKRNPNGTFLEPHQMYDRYTQEFLQGKARDVLRQNGRDGYKLIIPEALSTGIIRYENKTKGAQSEVELENQLRSSIRHQRVKPRMDEAHRKLQIELRGGQILLHPRIAESIEFSIISKENATCSHTPVNCAYEVLLSGGINVGTGTCYDLSSRLKLRVIGDVDRHRRSMQNVLGRVIHTGDPKIINRVNQIGSQQFIDRAIGPDKFELKREIFDRLKALDVDVRKVIREEEASAELDEMGRRWMRDQNVNIVNDIIQSLVKKGSRSEKLAHRNEQGMQARFRRTIATNLRDQRQGKEVLNIRGTRGQPEEKKFAAVLLMTGCDIVERAIWSNEETAILRGLYAYAHDKLGCVYRAMKKDFVWSIRPTYTDRCAGVCDRKRTIMVREDYFDLQREENDSVYKWIITEWDKNDVIISAKNGYLYSKYSGEDEDDILVHEIDDRLYTAMIDRILINGWIEKEGLSQIIKEEVRLESFDFTKDAYVDEAGFLVLPEYYDRVIASNIYDCKFKISRVSITSSSNDDPWDKKTADSIIDEQCLWKIPLPNIIDVRPCFRGDLLTSNSQEYSKRFSGIIDELKKDKEIYDDFIPVQEGVRPCVQGHVCRYAFYRQKLTIFTILKRYYPIERILELTDEEDYEYNLYLDKECYKKESLILNLRSIFSLICFLIDFGYEGREITRGEDEYLKIFNEINYGGHARKEAINKYFPQFYQRLMRVRTSENIEDLLPLAFYQALLLSDPCTDNSEKSSHPLILFCQDKVRVVPIRTATQERGLPLLCCIHIFKFHPGLQMRKKELEDDIKKTLPAIFDYWIELEMKRLDTGDRLRTRAQMVELYYSTNCGGSYETLNFVFPIVHPNKGFIACVISSKGGMGALNEDDVRRRFRRIQSSIQGIFSISIDEEMEIQLHHSGNIQARILEKVFFEHKWHIVQVKLNGKIFENHELITKLMN.

Belongs to the orbivirus VP2 family.

The protein localises to the virion. The VP2 protein is one of the two proteins (with VP5) which constitute the virus particle outer capsid. It is the major target of the host immunogenic response. This Epizootic hemorrhagic disease virus 1 (EHDV-1) protein is Outer capsid protein VP2 (Segment-2).